The sequence spans 351 residues: Soluble interferon alpha/beta receptor OPG204 (351 aa).

An N-terminal signal peptide occupies residues 1–23 (MKMKMMVRIYFVSLSLLLFHSYA). 2 consecutive Ig-like C2-type domains span residues 65-137 (LGEP…KNGD) and 155-237 (PKTY…IVVS). 2 disulfide bridges follow: C73/C129 and C172/C221. N117, N182, N261, N269, and N321 each carry an N-linked (GlcNAc...) asparagine; by host glycan. The Ig-like V-type domain occupies 246 to 345 (PSQDHRFKLI…HNYYFDKTLT (100 aa)). Cysteines 272 and 333 form a disulfide.

It belongs to the interleukin-1 receptor family. Interacts with host IFNA1.

It localises to the secreted. Counteracts the antiviral effects of host IFN-alpha/beta and key IFN-inducible proteins involved in viral RNA degradation suxh as host OAS1. Acts as a soluble IFN-alpha receptor and thus inhibits the interaction between host IFN-alpha and its receptor. This chain is Soluble interferon alpha/beta receptor OPG204 (OPG204), found in Cynomys gunnisoni (Gunnison's prairie dog).